Reading from the N-terminus, the 253-residue chain is Imidazole glycerol phosphate synthase subunit HisF (253 aa).

Catalysis depends on residues Asp-11 and Asp-130.

The protein belongs to the HisA/HisF family. In terms of assembly, heterodimer of HisH and HisF.

It is found in the cytoplasm. The enzyme catalyses 5-[(5-phospho-1-deoxy-D-ribulos-1-ylimino)methylamino]-1-(5-phospho-beta-D-ribosyl)imidazole-4-carboxamide + L-glutamine = D-erythro-1-(imidazol-4-yl)glycerol 3-phosphate + 5-amino-1-(5-phospho-beta-D-ribosyl)imidazole-4-carboxamide + L-glutamate + H(+). It functions in the pathway amino-acid biosynthesis; L-histidine biosynthesis; L-histidine from 5-phospho-alpha-D-ribose 1-diphosphate: step 5/9. Functionally, IGPS catalyzes the conversion of PRFAR and glutamine to IGP, AICAR and glutamate. The HisF subunit catalyzes the cyclization activity that produces IGP and AICAR from PRFAR using the ammonia provided by the HisH subunit. The sequence is that of Imidazole glycerol phosphate synthase subunit HisF from Clostridium beijerinckii (strain ATCC 51743 / NCIMB 8052) (Clostridium acetobutylicum).